An 810-amino-acid polypeptide reads, in one-letter code: Oligoxyloglucan-reducing end-specific xyloglucanase (810 aa).

Positions 1 to 28 (MRAKNGPGSWLALTAIATSLNTLALAAA) are cleaved as a signal peptide. Asn32 carries an N-linked (GlcNAc...) asparagine glycan. Catalysis depends on Asp66, which acts as the Nucleophile. A BNR 1 repeat occupies 126–135 (FVSQDRGATF). Residue Asn188 is glycosylated (N-linked (GlcNAc...) asparagine). Residues 226–236 (YVTRDSGESWE) form a BNR 2 repeat. Asn298, Asn312, and Asn321 each carry an N-linked (GlcNAc...) asparagine glycan. The BNR 3 repeat unit spans residues 359–369 (YLSHDGGKSWK). Asn455 carries an N-linked (GlcNAc...) asparagine glycan. Asp498 serves as the catalytic Proton donor. Asn544 carries N-linked (GlcNAc...) asparagine glycosylation. Residues 554 to 564 (YSADGGSSWTK) form a BNR 4 repeat. Residues Asn573 and Asn612 are each glycosylated (N-linked (GlcNAc...) asparagine). Residues 617–626 (YVTTDLGQTW) form a BNR 5 repeat. Residue Asn638 is glycosylated (N-linked (GlcNAc...) asparagine). BNR repeat units follow at residues 658-667 (YLSRDGGLSY), 705-716 (YHTRNFGKKWTK), and 759-769 (YRSDDNGKTWV).

This sequence belongs to the glycosyl hydrolase 74 family.

It is found in the secreted. It catalyses the reaction Hydrolysis of cellobiose from the reducing end of xyloglucans consisting of a beta-(1-&gt;4)-linked glucan carrying alpha-D-xylosyl groups on O-6 of the glucose residues. To be a substrate, the first residue must be unsubstituted, the second residue may bear a xylosyl group, whether further glycosylated or not, and the third residue, which becomes the new terminus by the action of the enzyme, is preferably xylosylated, but this xylose residue must not be further substituted.. Oligoxyloglucan-reducing end-specific xyloglucanase involved in degradation of xyloglucans. Releases the first two glycosyl segments from oligoxyloglucans. Active against cotton xyloglucan, tamarind xyloglucan and tamarind xyloglucan oligomers. The chain is Oligoxyloglucan-reducing end-specific xyloglucanase (xgcA) from Emericella nidulans (strain FGSC A4 / ATCC 38163 / CBS 112.46 / NRRL 194 / M139) (Aspergillus nidulans).